The following is a 240-amino-acid chain: Transcriptional regulatory protein BaeR (240 aa).

A Response regulatory domain is found at 12–125 (RILIVEDEPK…EVVARVKTIL (114 aa)). D61 bears the 4-aspartylphosphate mark. The segment at residues 131–234 (QRELQQQDAE…VYGVGYRWEA (104 aa)) is a DNA-binding region (ompR/PhoB-type).

Phosphorylated by BaeS.

It localises to the cytoplasm. In terms of biological role, member of the two-component regulatory system BaeS/BaeR. Activates the mdtABCD operon. The sequence is that of Transcriptional regulatory protein BaeR (baeR) from Escherichia coli O6:H1 (strain CFT073 / ATCC 700928 / UPEC).